A 141-amino-acid chain; its full sequence is Cystatin (141 aa).

The first 26 residues, 1–26 (MVHFQLPVAAPLCLLCALLLLPSATM), serve as a signal peptide directing secretion. A Cystatin domain is found at 29–129 (GGLSPRSVSD…CHFQVWSRPW (101 aa)). Positions 73–77 (QVVAG) match the Secondary area of contact motif. Cystine bridges form between Cys-91/Cys-107 and Cys-120/Cys-140.

It belongs to the cystatin family. As to expression, expressed at a low level by the venom gland (at protein level).

It localises to the secreted. Inhibits various C1 cysteine proteases including cathepsin L, papain and cathepsin B. This protein has no toxic activity and its function in the venom is unknown. It may play a role as a housekeeping or regulatory protein. In Naja kaouthia (Monocled cobra), this protein is Cystatin.